The chain runs to 493 residues: Putative trans-acting regulator SP_1800 (493 aa).

It belongs to the AtxA/AcpA family.

This is Putative trans-acting regulator SP_1800 from Streptococcus pneumoniae serotype 4 (strain ATCC BAA-334 / TIGR4).